Reading from the N-terminus, the 257-residue chain is Imidazole glycerol phosphate synthase subunit HisF (257 aa).

Active-site residues include aspartate 11 and aspartate 130.

It belongs to the HisA/HisF family. As to quaternary structure, heterodimer of HisH and HisF.

The protein localises to the cytoplasm. The enzyme catalyses 5-[(5-phospho-1-deoxy-D-ribulos-1-ylimino)methylamino]-1-(5-phospho-beta-D-ribosyl)imidazole-4-carboxamide + L-glutamine = D-erythro-1-(imidazol-4-yl)glycerol 3-phosphate + 5-amino-1-(5-phospho-beta-D-ribosyl)imidazole-4-carboxamide + L-glutamate + H(+). The protein operates within amino-acid biosynthesis; L-histidine biosynthesis; L-histidine from 5-phospho-alpha-D-ribose 1-diphosphate: step 5/9. Its function is as follows. IGPS catalyzes the conversion of PRFAR and glutamine to IGP, AICAR and glutamate. The HisF subunit catalyzes the cyclization activity that produces IGP and AICAR from PRFAR using the ammonia provided by the HisH subunit. This Vibrio campbellii (strain ATCC BAA-1116) protein is Imidazole glycerol phosphate synthase subunit HisF.